The chain runs to 883 residues: Probable ribonuclease ZC3H12C (883 aa).

Disordered stretches follow at residues 53 to 109 (QLSP…ISVE) and 139 to 158 (DFKP…PPDV). A Phosphoserine modification is found at Ser230. In terms of domain architecture, RNase NYN spans 245–400 (LRPIVIDGSN…LGRHGPSLDN (156 aa)). The C3H1-type zinc finger occupies 410–435 (EHKKQPCPYGKKCTYGHKCKYYHPER). 3 disordered regions span residues 456–551 (AKTA…FPPQ), 680–738 (FHDP…KAPH), and 754–775 (SRLY…EGLG). Positions 466 to 477 (KSNSVPCSTKAD) are enriched in polar residues. Residues 503-515 (LEEKLPTKNKLET) show a composition bias toward basic and acidic residues. Residues 517–542 (SVPSLVSIPATSTAKPQSTTSLSNGL) show a composition bias toward polar residues. Low complexity predominate over residues 705–714 (HLALHLPHSA).

It belongs to the ZC3H12 family. It depends on Mg(2+) as a cofactor.

Functionally, may function as RNase and regulate the levels of target RNA species. This Homo sapiens (Human) protein is Probable ribonuclease ZC3H12C (ZC3H12C).